The chain runs to 88 residues: M-zodatoxin-Lt1a (88 aa).

Positions 1–22 (MKYFVVALALAVALVCIAESTA) are cleaved as a signal peptide. A propeptide spanning residues 23–62 (YDVNEELENELDDLSDAAWLAKAAEDLQALDDFEESEESR) is cleaved from the precursor. The short motif at 59–62 (EESR) is the Processing quadruplet motif element.

Post-translationally, cleavage of the propeptide depends on the processing quadruplet motif (XXXR, with at least one of X being E). Expressed by the venom gland.

It localises to the secreted. Functionally, has antimicrobial activity against Gram-positive bacteria (A.globiformis VKM Ac-1112 (MIC=0.5 uM), and B.subtilis VKM B-501 (MIC=1.0 uM)), Gram-negative bacteria (E.coli DH5-alpha (MIC=1.0 uM), E.coli MH1 (MIC=0.7 uM), and P.aeruginosa PAO1 (MIC=4.1 uM)), and yeasts (P.pastoris GS115 (MIC=17 uM), and S.cerevisiae Y190 (MIC&gt;33 uM)). Has a moderate hemolytic activity against rabbit erythrocytes. Causes paralysis, but is not lethal when injected into insect (M.domestica) larvae. This Lachesana tarabaevi (Spider) protein is M-zodatoxin-Lt1a.